Here is a 563-residue protein sequence, read N- to C-terminus: Urocanate hydratase (563 aa).

NAD(+)-binding positions include 53–54 (GG), Gln-131, 177–179 (GMG), Glu-197, Arg-202, 243–244 (NA), 264–268 (QTSAH), 274–275 (YL), and Tyr-323. Cys-411 is a catalytic residue. Gly-493 is a binding site for NAD(+).

Belongs to the urocanase family. NAD(+) serves as cofactor.

It is found in the cytoplasm. It carries out the reaction 4-imidazolone-5-propanoate = trans-urocanate + H2O. The protein operates within amino-acid degradation; L-histidine degradation into L-glutamate; N-formimidoyl-L-glutamate from L-histidine: step 2/3. Its function is as follows. Catalyzes the conversion of urocanate to 4-imidazolone-5-propionate. This chain is Urocanate hydratase, found in Yersinia pestis bv. Antiqua (strain Antiqua).